A 296-amino-acid polypeptide reads, in one-letter code: 3-methyl-2-oxobutanoate hydroxymethyltransferase (296 aa).

The disordered stretch occupies residues 1–33 (MDASDTPTHPAPHPADPAATPYGAPTTPPRPLR). Positions 16–25 (DPAATPYGAP) are enriched in low complexity. 2 residues coordinate Mg(2+): D77 and D116. Residues 77 to 78 (DS), D116, and K146 each bind 3-methyl-2-oxobutanoate. E148 lines the Mg(2+) pocket. E214 functions as the Proton acceptor in the catalytic mechanism.

The protein belongs to the PanB family. Homodecamer; pentamer of dimers. Mg(2+) is required as a cofactor.

The protein localises to the cytoplasm. It carries out the reaction 3-methyl-2-oxobutanoate + (6R)-5,10-methylene-5,6,7,8-tetrahydrofolate + H2O = 2-dehydropantoate + (6S)-5,6,7,8-tetrahydrofolate. Its pathway is cofactor biosynthesis; (R)-pantothenate biosynthesis; (R)-pantoate from 3-methyl-2-oxobutanoate: step 1/2. In terms of biological role, catalyzes the reversible reaction in which hydroxymethyl group from 5,10-methylenetetrahydrofolate is transferred onto alpha-ketoisovalerate to form ketopantoate. In Frankia casuarinae (strain DSM 45818 / CECT 9043 / HFP020203 / CcI3), this protein is 3-methyl-2-oxobutanoate hydroxymethyltransferase.